We begin with the raw amino-acid sequence, 874 residues long: MIMKQEPTTYQPEEIEKKIYEICSHRGYFEIDGNEAIQEKNKRFCLMMPPPNVTGVLHIGHALTLSLQDILARYKRMDGYKTLYQPGLDHAGIATQNVVEKQLLSQGIKKEDLGREEFIKKVWEWKEKSGGAILEQMKRLGVSAAFSRTRFTMDKGLQRAVKLAFLKWYEKGLIIQDNYMVNWCTKDGALSDIEVEYEERKGALYYIRYYLENQKDYLVVATTRPETLFGDSALMVNPNDERYKHLVGQKAILPLIHRTIPIIADEHVEMEFGTGCVKVTPGHDFNDYEVGKRHHLETIKIFDEKGILNAHCGEFENLERLEARDKVVERLKENALLEKIEEHTHQVGHCYRCHNVVEPYVSKQWFVKPEIAQSSIEKIQQGLARFYPSNWINNYNAWMRELRPWCISRQLFWGHQIPVFTCENNHQFVSLDTPLSCPTCKSETLEQDKDVLDTWFSSGLWAFSTLGWGQEKSGLFNESDLKDFYPNTTLITGFDILFFWVARMLFCSESLLGELPFKDIYLHALVRDEKGEKMSKSKGNVIDPLEMIEKYGADSLRFTLANLCATGRDIKLSTTHLENNKNFANKLFNAASYLKLKQESFKDKERLNEYQTPLGRYAKSRLNSATKEARNALDNYRFNDATTLLYRFLWGEFCDWFIEFSKVENEAIDELGSVLKEALKLLHPFMPFISESLYHKLSNTELENTESIMVMPYPKDLAQDEKLEHEFEVIKDCIVSLRRLKIMLETPPIVLKEASVGLREAIENTERLQTYAQKLARLEKVSVISSKPLKSVSDVGEFCQTYANLENLDLSPLVARLKKQLEKLEKEKLKLNLHNENFVKNAPKSVLEKAKESLKTLLEKESKIKQELDLLEQP.

A 'HIGH' region motif is present at residues 51 to 61 (PNVTGVLHIGH). Positions 533–537 (KMSKS) match the 'KMSKS' region motif. Lysine 536 serves as a coordination point for ATP. Residues 813–873 (LVARLKKQLE…IKQELDLLEQ (61 aa)) are a coiled coil.

It belongs to the class-I aminoacyl-tRNA synthetase family. ValS type 1 subfamily. In terms of assembly, monomer.

It localises to the cytoplasm. The enzyme catalyses tRNA(Val) + L-valine + ATP = L-valyl-tRNA(Val) + AMP + diphosphate. Its function is as follows. Catalyzes the attachment of valine to tRNA(Val). As ValRS can inadvertently accommodate and process structurally similar amino acids such as threonine, to avoid such errors, it has a 'posttransfer' editing activity that hydrolyzes mischarged Thr-tRNA(Val) in a tRNA-dependent manner. The chain is Valine--tRNA ligase from Helicobacter pylori (strain ATCC 700392 / 26695) (Campylobacter pylori).